The primary structure comprises 379 residues: Lipoyl synthase 1, mitochondrial (379 aa).

[4Fe-4S] cluster-binding residues include cysteine 106, cysteine 111, cysteine 117, cysteine 137, cysteine 141, cysteine 144, and serine 352. Positions 122–341 (EHGTQTATIM…EERGNELGFL (220 aa)) constitute a Radical SAM core domain.

The protein belongs to the radical SAM superfamily. Lipoyl synthase family. [4Fe-4S] cluster is required as a cofactor.

It is found in the mitochondrion. The enzyme catalyses [[Fe-S] cluster scaffold protein carrying a second [4Fe-4S](2+) cluster] + N(6)-octanoyl-L-lysyl-[protein] + 2 oxidized [2Fe-2S]-[ferredoxin] + 2 S-adenosyl-L-methionine + 4 H(+) = [[Fe-S] cluster scaffold protein] + N(6)-[(R)-dihydrolipoyl]-L-lysyl-[protein] + 4 Fe(3+) + 2 hydrogen sulfide + 2 5'-deoxyadenosine + 2 L-methionine + 2 reduced [2Fe-2S]-[ferredoxin]. The protein operates within protein modification; protein lipoylation via endogenous pathway; protein N(6)-(lipoyl)lysine from octanoyl-[acyl-carrier-protein]: step 2/2. Its function is as follows. Catalyzes the radical-mediated insertion of two sulfur atoms into the C-6 and C-8 positions of the octanoyl moiety bound to the lipoyl domains of lipoate-dependent enzymes, thereby converting the octanoylated domains into lipoylated derivatives. The sequence is that of Lipoyl synthase 1, mitochondrial from Drosophila yakuba (Fruit fly).